Consider the following 131-residue polypeptide: Snaclec coagulation factor IX/factor X-binding protein subunit A (131 aa).

The 131-residue stretch at 1–131 (DCLPGWSSHE…EEPQRFTCEI (131 aa)) folds into the C-type lectin domain. 3 cysteine pairs are disulfide-bonded: cysteine 2–cysteine 13, cysteine 30–cysteine 129, and cysteine 104–cysteine 121. Residues serine 41, glutamate 43, and glutamate 47 each contribute to the Ca(2+) site. Ca(2+) is bound at residue glutamate 130.

Belongs to the snaclec family. Heterodimer of subunits A and B; disulfide-linked. In terms of tissue distribution, expressed by the venom gland.

It is found in the secreted. In terms of biological role, anticoagulant protein which binds to coagulation factor IX (F9) and coagulation factor X (F10) in the presence of calcium. It may bind the gamma-carboxyglutamic acid-domain regions of factors with a 1 to 1 stoichiometry. The dissociation constant (K(d)) are 6.6 nM for factor IX (F9) and 125 nM for factor X (F10). Does not bind carbohydrates. This Echis carinatus (Saw-scaled viper) protein is Snaclec coagulation factor IX/factor X-binding protein subunit A.